The sequence spans 304 residues: Nucleotide-binding protein KRH_12070 (304 aa).

G27–S34 is an ATP binding site. GTP is bound at residue D78–G81.

Belongs to the RapZ-like family.

In terms of biological role, displays ATPase and GTPase activities. This is Nucleotide-binding protein KRH_12070 from Kocuria rhizophila (strain ATCC 9341 / DSM 348 / NBRC 103217 / DC2201).